A 138-amino-acid chain; its full sequence is Large ribosomal subunit protein bL17 (138 aa).

It belongs to the bacterial ribosomal protein bL17 family. In terms of assembly, part of the 50S ribosomal subunit. Contacts protein L32.

The sequence is that of Large ribosomal subunit protein bL17 from Nitrobacter hamburgensis (strain DSM 10229 / NCIMB 13809 / X14).